A 105-amino-acid polypeptide reads, in one-letter code: Large ribosomal subunit protein uL24 (105 aa).

It belongs to the universal ribosomal protein uL24 family. As to quaternary structure, part of the 50S ribosomal subunit.

In terms of biological role, one of two assembly initiator proteins, it binds directly to the 5'-end of the 23S rRNA, where it nucleates assembly of the 50S subunit. Functionally, one of the proteins that surrounds the polypeptide exit tunnel on the outside of the subunit. In Nitrosococcus oceani (strain ATCC 19707 / BCRC 17464 / JCM 30415 / NCIMB 11848 / C-107), this protein is Large ribosomal subunit protein uL24.